Here is a 385-residue protein sequence, read N- to C-terminus: Methylthioribose-1-phosphate isomerase (385 aa).

The active-site Proton donor is the Asp255.

This sequence belongs to the eIF-2B alpha/beta/delta subunits family. MtnA subfamily.

The protein resides in the cytoplasm. Its subcellular location is the nucleus. The enzyme catalyses 5-(methylsulfanyl)-alpha-D-ribose 1-phosphate = 5-(methylsulfanyl)-D-ribulose 1-phosphate. Its pathway is amino-acid biosynthesis; L-methionine biosynthesis via salvage pathway; L-methionine from S-methyl-5-thio-alpha-D-ribose 1-phosphate: step 1/6. Catalyzes the interconversion of methylthioribose-1-phosphate (MTR-1-P) into methylthioribulose-1-phosphate (MTRu-1-P). The polypeptide is Methylthioribose-1-phosphate isomerase (mri1) (Aspergillus clavatus (strain ATCC 1007 / CBS 513.65 / DSM 816 / NCTC 3887 / NRRL 1 / QM 1276 / 107)).